The following is a 244-amino-acid chain: DNA repair protein RecO (244 aa).

This sequence belongs to the RecO family.

In terms of biological role, involved in DNA repair and RecF pathway recombination. The polypeptide is DNA repair protein RecO (Jannaschia sp. (strain CCS1)).